A 501-amino-acid polypeptide reads, in one-letter code: Solute carrier family 2, facilitated glucose transporter member 5 (501 aa).

Residue M1 is modified to N-acetylmethionine. At 1-18 (MEPQDPVKREGRLTPVIV) the chain is on the cytoplasmic side. The helical transmembrane segment at 19-39 (LATLIAAFGSSFQYGYNVATI) threads the bilayer. Y32 is a binding site for D-fructose. Residues 40–68 (NSPSEFMKDFYNYTYYDRVGEYMNEFYLT) lie on the Extracellular side of the membrane. N-linked (GlcNAc...) asparagine glycosylation occurs at N51. The chain crosses the membrane as a helical span at residues 69–91 (LLWSVTVSMFPFGGFLGSLMVGP). Over 92–98 (LVNNLGR) the chain is Cytoplasmic. The helical transmembrane segment at 99–119 (KGTLLFNNIFSIVPALLMGFS) threads the bilayer. The Extracellular portion of the chain corresponds to 120–126 (DLAKSFE). The helical transmembrane segment at 127-149 (MIIVARVLVGICAGLSSNVVPMY) threads the bilayer. Residues 150–161 (LGELAPKNWRGA) lie on the Cytoplasmic side of the membrane. Residues 162–182 (LGVVPQLFITIGILVAQIFGL) form a helical membrane-spanning segment. Q167 is a binding site for D-fructose. The Extracellular segment spans residues 183–192 (RSLLANEEGW). The helical transmembrane segment at 193–213 (PILLGLTGIPAVLQLLFLPFF) threads the bilayer. Residues 214-277 (PESPRYLLIQ…LFKMRSLRWQ (64 aa)) are Cytoplasmic-facing. Residues 278–298 (VISIIVLMAGQQLSGVNAIYY) form a helical membrane-spanning segment. Residues Q288 and 296 to 298 (IYY) contribute to the D-fructose site. The Extracellular portion of the chain corresponds to 299 to 313 (YADQIYLSAGVKEDD). The helical transmembrane segment at 314–334 (VQYVTAGTGAVNVLITVCAIF) threads the bilayer. Residues 335-342 (VVELMGRR) lie on the Cytoplasmic side of the membrane. Residues 343 to 363 (FLLLLGFSVCFTACCVLTGAL) form a helical membrane-spanning segment. Residues 364–371 (AMQDVISW) lie on the Extracellular side of the membrane. Residues 372–394 (MPYVSIACVISYVIGHALGPSPI) form a helical membrane-spanning segment. D-fructose is bound at residue H387. At 395 to 412 (PALLVTEIFLQSSRPAAY) the chain is on the cytoplasmic side. A helical membrane pass occupies residues 413–433 (MVAGTVHWLSNFTVGLVFPFI). D-fructose is bound at residue 419-420 (HW). Over 434–439 (QVGLGA) the chain is Extracellular. A helical membrane pass occupies residues 440 to 460 (YSFVIFAVICFLTTVYIFLII). At 461–501 (PETKSKTFIEINQIFIKMNKVPGVHPEKEELKEFPPSTARQ) the chain is on the cytoplasmic side.

This sequence belongs to the major facilitator superfamily. Sugar transporter (TC 2.A.1.1) family. Glucose transporter subfamily.

The protein localises to the apical cell membrane. Its subcellular location is the cell membrane. It localises to the sarcolemma. The catalysed reaction is D-fructose(out) = D-fructose(in). Functions as a fructose transporter that has only low activity with other monosaccharides. Can mediate the uptake of deoxyglucose, but with low efficiency. Essential for fructose uptake in the small intestine. Plays a role in the regulation of salt uptake and blood pressure in response to dietary fructose. Required for the development of high blood pressure in response to high dietary fructose intake. The chain is Solute carrier family 2, facilitated glucose transporter member 5 from Ovis aries (Sheep).